Reading from the N-terminus, the 455-residue chain is MITNEFDTITAIATPLGEGAIGIVRISGSKALAIIKKIFKGKNLDDVPSHTINYGHIVENGAIIDEVMVSVMRAPKTFTREDVIEINTHGGVAVTNEILQLVLRSGARMADPGEFTKRAFLNGRVDLAQAEAVMDLIRAKTDKAMAVAVQQLDGSLSNLINNTRQEILNTLAQVEVNIDYPEYDDVEEMTTALMREKTQEFETLLTNLLKTARRGKILREGLSTAIIGRPNVGKSSLLNNLLREEKAIVTDIEGTTRDVIEEYVNIKGVPLKLIDTAGIRETDDLVEKIGVERSKKALEEADLVLLVLNSAEKLTDQDRTLLEISQNSNRLILLNKTDLPEQIETDQLPEDCIKISVIKNQNIDVIEERINKLFFDNAAIVEKDATYLSNARHISLIEKALKSLQAVNDGLELGMPVDLLQVDMTRTWEILGEITGDAAPDELITQLFSQFCLGK.

Arginine 25, glutamate 85, and arginine 124 together coordinate (6S)-5-formyl-5,6,7,8-tetrahydrofolate. Residues 221–375 enclose the TrmE-type G domain; it reads GLSTAIIGRP…IEERINKLFF (155 aa). K(+) is bound at residue asparagine 231. Residues 231-236, 250-256, and 275-278 contribute to the GTP site; these read NVGKSS, TDIEGTT, and DTAG. Serine 235 serves as a coordination point for Mg(2+). The K(+) site is built by threonine 250, isoleucine 252, and threonine 255. Mg(2+) is bound at residue threonine 256. (6S)-5-formyl-5,6,7,8-tetrahydrofolate is bound at residue lysine 455.

The protein belongs to the TRAFAC class TrmE-Era-EngA-EngB-Septin-like GTPase superfamily. TrmE GTPase family. In terms of assembly, homodimer. Heterotetramer of two MnmE and two MnmG subunits. K(+) serves as cofactor.

The protein localises to the cytoplasm. In terms of biological role, exhibits a very high intrinsic GTPase hydrolysis rate. Involved in the addition of a carboxymethylaminomethyl (cmnm) group at the wobble position (U34) of certain tRNAs, forming tRNA-cmnm(5)s(2)U34. This Streptococcus mutans serotype c (strain ATCC 700610 / UA159) protein is tRNA modification GTPase MnmE.